The primary structure comprises 257 residues: UPF0246 protein CV_1250 (257 aa).

The protein belongs to the UPF0246 family.

This Chromobacterium violaceum (strain ATCC 12472 / DSM 30191 / JCM 1249 / CCUG 213 / NBRC 12614 / NCIMB 9131 / NCTC 9757 / MK) protein is UPF0246 protein CV_1250.